A 251-amino-acid polypeptide reads, in one-letter code: NADPH-dependent oxidoreductase (251 aa).

This sequence belongs to the flavin oxidoreductase frp family. The cofactor is FMN.

Its function is as follows. Reduces FMN, organic nitro compounds and disulfide DTNB. Involved in maintenance of the cellular redox state and the disulfide stress response. This Staphylococcus aureus (strain bovine RF122 / ET3-1) protein is NADPH-dependent oxidoreductase (nfrA).